We begin with the raw amino-acid sequence, 209 residues long: Peptide methionine sulfoxide reductase MsrA (209 aa).

The active site involves Cys51.

This sequence belongs to the MsrA Met sulfoxide reductase family.

The catalysed reaction is L-methionyl-[protein] + [thioredoxin]-disulfide + H2O = L-methionyl-(S)-S-oxide-[protein] + [thioredoxin]-dithiol. It catalyses the reaction [thioredoxin]-disulfide + L-methionine + H2O = L-methionine (S)-S-oxide + [thioredoxin]-dithiol. Its function is as follows. Has an important function as a repair enzyme for proteins that have been inactivated by oxidation. Catalyzes the reversible oxidation-reduction of methionine sulfoxide in proteins to methionine. This Vibrio vulnificus (strain CMCP6) protein is Peptide methionine sulfoxide reductase MsrA.